Here is a 662-residue protein sequence, read N- to C-terminus: Junctophilin-1 (662 aa).

Residues 1–640 (MTGGRFDFDD…EREANSGPNS (640 aa)) lie on the Cytoplasmic side of the membrane. MORN repeat units lie at residues 14–36 (YCGG…KGQG), 38–59 (YSGS…SGNT), 60–82 (YQGY…KWMY), 106–128 (YEGT…DGGT), and 129–151 (YQGQ…PYGM). A phosphoserine mark is found at Ser157, Ser216, and Ser220. Residues 228–247 (SKSSISSKRSSVRSDAAMSR) form a disordered region. 2 MORN repeats span residues 281 to 303 (YMGE…NGMK) and 304 to 326 (YEGE…DGSK). A compositionally biased stretch (basic and acidic residues) spans 432–443 (VDAKENPEEKVP). The interval 432-634 (VDAKENPEEK…DSCPSMEREA (203 aa)) is disordered. Thr448 bears the Phosphothreonine mark. Ser452 bears the Phosphoserine mark. The residue at position 461 (Thr461) is a Phosphothreonine. 3 positions are modified to phosphoserine: Ser465, Ser469, and Ser475. Over residues 584-599 (KPSPNKWSPPKSVTKP) the composition is skewed to low complexity. A compositionally biased stretch (basic and acidic residues) spans 600-614 (VAKESKAEPKAKKSE). Residues 641-661 (VMIVLVMLLNIGLAILFVHFL) traverse the membrane as a helical; Anchor for type IV membrane protein segment.

It belongs to the junctophilin family.

It localises to the cell membrane. The protein resides in the endoplasmic reticulum membrane. The protein localises to the sarcoplasmic reticulum membrane. Its function is as follows. Junctophilins contribute to the formation of junctional membrane complexes (JMCs) which link the plasma membrane with the endoplasmic or sarcoplasmic reticulum in excitable cells. Provides a structural foundation for functional cross-talk between the cell surface and intracellular calcium release channels. JPH1 contributes to the construction of the skeletal muscle triad by linking the t-tubule (transverse-tubule) and SR (sarcoplasmic reticulum) membranes. The polypeptide is Junctophilin-1 (JPH1) (Oryctolagus cuniculus (Rabbit)).